A 93-amino-acid chain; its full sequence is Small ribosomal subunit protein bS18 (93 aa).

It belongs to the bacterial ribosomal protein bS18 family. In terms of assembly, part of the 30S ribosomal subunit. Forms a tight heterodimer with protein bS6.

In terms of biological role, binds as a heterodimer with protein bS6 to the central domain of the 16S rRNA, where it helps stabilize the platform of the 30S subunit. This is Small ribosomal subunit protein bS18 from Verminephrobacter eiseniae (strain EF01-2).